A 547-amino-acid chain; its full sequence is Large cysteine-rich periplasmic protein OmcB, serovar C (547 aa).

The N-terminal stretch at 1-22 is a signal peptide; it reads MNKLIRRAVTIFAVTSVASLFA. The propeptide occupies 23–40; sequence SGVLETSMAESLSTNVIS. Residues 45–84 form a disordered region; sequence KAKDNTSHKSKKARKNHSKETPVDRKEVAPVHESKATGPK. Residues 52–61 are compositionally biased toward basic residues; it reads HKSKKARKNH. Residues 62–79 show a composition bias toward basic and acidic residues; the sequence is SKETPVDRKEVAPVHESK.

In terms of assembly, part of a disulfide cross-linked outer membrane complex (COMC) composed of the major outer membrane porin (MOMP), the small cysteine-rich protein (OmcA) and the large cysteine-rich periplasmic protein (OmcB).

It localises to the periplasm. In terms of biological role, in elementary bodies (EBs, the infectious stage, which is able to survive outside the host cell) provides the structural integrity of the outer envelope through disulfide cross-links with the small cysteine-rich protein and the major outer membrane porin. It has been described in publications as the Sarkosyl-insoluble COMC (Chlamydia outer membrane complex), and serves as the functional equivalent of peptidoglycan. The protein is Large cysteine-rich periplasmic protein OmcB, serovar C (omcB) of Chlamydia trachomatis.